The sequence spans 996 residues: Leucine-rich repeat receptor-like kinase protein THICK TASSEL DWARF1 (996 aa).

Positions M1–A26 are cleaved as a signal peptide. 21 LRR repeats span residues T78 to L103, D104 to M127, P128 to A151, F153 to A178, S180 to D201, L202 to L226, L251 to L275, S276 to L299, T300 to L323, N325 to F349, E351 to N371, G372 to G395, N397 to C419, K420 to L443, Q445 to G466, D467 to L490, P491 to L514, N516 to C538, A539 to L562, K563 to M586, and T587 to V611. A helical transmembrane segment spans residues K646–A666. The Protein kinase domain maps to L703 to S978. ATP is bound by residues I709 to V717 and K731. The Proton acceptor role is filled by D828.

This sequence belongs to the protein kinase superfamily. Ser/Thr protein kinase family. In terms of tissue distribution, highly expressed in the apex of the vegetative seedlings. Lower expression in young leaves, ears and tassels, embryos and roots. Not expressed in the shoot meristem itself. Detected in the three outermost layers of the inflorescence meristem, and on its flanks at positions of prospective spikelet pair meristems. Not confined to meristematic cells but also detected in primordia of glumes, lemmas and stamens.

Its subcellular location is the membrane. It carries out the reaction L-seryl-[protein] + ATP = O-phospho-L-seryl-[protein] + ADP + H(+). The catalysed reaction is L-threonyl-[protein] + ATP = O-phospho-L-threonyl-[protein] + ADP + H(+). Its function is as follows. Receptor-like kinase protein that regulates meristem size during inflorescence and flower development. Promotes vegetative meristem growth and restricts inflorescence and floral meristem growth. Based on additive and synergistic phenotypes of double mutants, it is probable that unlike CLV1 and CLV2 in A.thaliana, TD1 and FAE2 do not function exclusively in a single pathway. However, KN-1 and TD1 do function in a linear pathway to maintain vegetative meristem homeostasis, but they may interact with different partners during development. This Zea mays (Maize) protein is Leucine-rich repeat receptor-like kinase protein THICK TASSEL DWARF1 (TD1).